Reading from the N-terminus, the 148-residue chain is Snaclec 3 (148 aa).

A signal peptide spans 1–23; sequence WGDSSSSASACWSCSSPLSGTEA. Cystine bridges form between Cys27-Cys38, Cys55-Cys144, and Cys121-Cys136. The C-type lectin domain maps to 34 to 145; it reads YDQNCYKAFE…CSGTHSFVCK (112 aa).

Belongs to the snaclec family. As to quaternary structure, heterodimer; disulfide-linked. In terms of tissue distribution, expressed by the venom gland.

It localises to the secreted. Interferes with one step of hemostasis (modulation of platelet aggregation, or coagulation cascade, for example). In Echis carinatus sochureki (Saw-scaled viper), this protein is Snaclec 3.